Consider the following 294-residue polypeptide: Bifunctional protein FolD (294 aa).

NADP(+) is bound by residues 166 to 168, serine 191, and isoleucine 232; that span reads GRS.

The protein belongs to the tetrahydrofolate dehydrogenase/cyclohydrolase family. Homodimer.

The enzyme catalyses (6R)-5,10-methylene-5,6,7,8-tetrahydrofolate + NADP(+) = (6R)-5,10-methenyltetrahydrofolate + NADPH. It catalyses the reaction (6R)-5,10-methenyltetrahydrofolate + H2O = (6R)-10-formyltetrahydrofolate + H(+). It functions in the pathway one-carbon metabolism; tetrahydrofolate interconversion. Functionally, catalyzes the oxidation of 5,10-methylenetetrahydrofolate to 5,10-methenyltetrahydrofolate and then the hydrolysis of 5,10-methenyltetrahydrofolate to 10-formyltetrahydrofolate. The polypeptide is Bifunctional protein FolD (Bradyrhizobium diazoefficiens (strain JCM 10833 / BCRC 13528 / IAM 13628 / NBRC 14792 / USDA 110)).